The following is a 115-amino-acid chain: Macrophage migration inhibitory factor (115 aa).

P2 acts as the Proton acceptor; via imino nitrogen in catalysis. Substrate-binding residues include K33 and I65. An N6-acetyllysine; alternate modification is found at K78. K78 carries the N6-succinyllysine; alternate modification. N98 is a binding site for substrate.

The protein belongs to the MIF family. As to quaternary structure, homotrimer. Interacts with CXCR2 extracellular domain. Interacts with the CD74 extracellular domain, USO1, COPS5 and BNIPL. In terms of tissue distribution, expressed in a wide variety of organs including brain, spleen, liver, muscle and kidney.

It localises to the secreted. Its subcellular location is the cytoplasm. The enzyme catalyses 3-phenylpyruvate = enol-phenylpyruvate. It catalyses the reaction L-dopachrome = 5,6-dihydroxyindole-2-carboxylate. Pro-inflammatory cytokine involved in the innate immune response to bacterial pathogens. The expression of MIF at sites of inflammation suggests a role as mediator in regulating the function of macrophages in host defense. Counteracts the anti-inflammatory activity of glucocorticoids. Has phenylpyruvate tautomerase and dopachrome tautomerase activity (in vitro), but the physiological substrate is not known. It is not clear whether the tautomerase activity has any physiological relevance, and whether it is important for cytokine activity. The sequence is that of Macrophage migration inhibitory factor (Mif) from Rattus norvegicus (Rat).